We begin with the raw amino-acid sequence, 332 residues long: 5-dehydro-2-deoxygluconokinase (332 aa).

It belongs to the carbohydrate kinase PfkB family.

The enzyme catalyses 5-dehydro-2-deoxy-D-gluconate + ATP = 6-phospho-5-dehydro-2-deoxy-D-gluconate + ADP + H(+). It participates in polyol metabolism; myo-inositol degradation into acetyl-CoA; acetyl-CoA from myo-inositol: step 5/7. In terms of biological role, catalyzes the phosphorylation of 5-dehydro-2-deoxy-D-gluconate (2-deoxy-5-keto-D-gluconate or DKG) to 6-phospho-5-dehydro-2-deoxy-D-gluconate (DKGP). This is 5-dehydro-2-deoxygluconokinase from Bacillus anthracis (strain A0248).